We begin with the raw amino-acid sequence, 346 residues long: Annexin A1 (346 aa).

A Phosphoserine; by TRPM7 modification is found at Ser-5. An Isoglutamyl lysine isopeptide (Gln-Lys) (interchain with K-?) cross-link involves residue Gln-19. Residue Tyr-21 is modified to Phosphotyrosine; by EGFR. A phosphoserine mark is found at Ser-34 and Ser-37. Annexin repeat units lie at residues 42 to 113 (FNPS…ALLK), 114 to 185 (TPAR…SLAK), 197 to 269 (DLAD…AIVK), and 273 to 344 (SKPM…ALCG). Lys-58 is subject to N6-acetyllysine. Ca(2+)-binding residues include Gly-59, Val-60, Glu-62, Lys-97, Leu-100, Glu-105, Met-127, Gly-129, Gly-131, Thr-132, and Glu-134. Thr-136 is subject to Phosphothreonine. 3 residues coordinate Ca(2+): Asp-171, Gly-210, and Arg-213. Lys-214 participates in a covalent cross-link: Glycyl lysine isopeptide (Lys-Gly) (interchain with G-Cter in SUMO1); alternate. Residue Lys-214 forms a Glycyl lysine isopeptide (Lys-Gly) (interchain with G-Cter in SUMO2); alternate linkage. Residues Gly-215, Asp-253, Glu-255, and Met-256 each coordinate Ca(2+). Lys-257 is covalently cross-linked (Glycyl lysine isopeptide (Lys-Gly) (interchain with G-Cter in SUMO1)). Ca(2+)-binding residues include Glu-261, Met-286, Gly-288, and Gly-290. The residue at position 312 (Lys-312) is an N6-acetyllysine. Cysteines 324 and 343 form a disulfide. Ca(2+) is bound by residues Leu-328, Glu-330, and Thr-331. Residue Lys-332 forms a Glycyl lysine isopeptide (Lys-Gly) (interchain with G-Cter in SUMO1) linkage. Glu-336 is a binding site for Ca(2+).

This sequence belongs to the annexin family. Homodimer; non-covalently linked. Homodimer; linked by transglutamylation. Homodimers linked by transglutamylation are observed in placenta, but not in other tissues. Interacts with S100A11. Heterotetramer, formed by two molecules each of S100A11 and ANXA1. Interacts with DYSF. Interacts with EGFR. In terms of processing, phosphorylated by protein kinase C, EGFR and TRPM7. Phosphorylated in response to EGF treatment. Sumoylated. Post-translationally, proteolytically cleaved by cathepsin CTSG to release the active N-terminal peptide Ac2-26.

Its subcellular location is the nucleus. The protein localises to the cytoplasm. It is found in the cell projection. It localises to the cilium. The protein resides in the basolateral cell membrane. Its subcellular location is the lateral cell membrane. The protein localises to the cell membrane. It is found in the apical cell membrane. It localises to the membrane. The protein resides in the early endosome. Its subcellular location is the cytoplasmic vesicle membrane. The protein localises to the endosome membrane. It is found in the secreted. It localises to the extracellular space. The protein resides in the extracellular exosome. Its subcellular location is the cytoplasmic vesicle. The protein localises to the secretory vesicle lumen. It is found in the phagocytic cup. Functionally, plays important roles in the innate immune response as effector of glucocorticoid-mediated responses and regulator of the inflammatory process. Has anti-inflammatory activity. Plays a role in glucocorticoid-mediated down-regulation of the early phase of the inflammatory response. Contributes to the adaptive immune response by enhancing signaling cascades that are triggered by T-cell activation, regulates differentiation and proliferation of activated T-cells. Promotes the differentiation of T-cells into Th1 cells and negatively regulates differentiation into Th2 cells. Has no effect on unstimulated T-cells. Negatively regulates hormone exocytosis via activation of the formyl peptide receptors and reorganization of the actin cytoskeleton. Has high affinity for Ca(2+) and can bind up to eight Ca(2+) ions. Displays Ca(2+)-dependent binding to phospholipid membranes. Plays a role in the formation of phagocytic cups and phagosomes. Plays a role in phagocytosis by mediating the Ca(2+)-dependent interaction between phagosomes and the actin cytoskeleton. Functions at least in part by activating the formyl peptide receptors and downstream signaling cascades. Promotes chemotaxis of granulocytes and monocytes via activation of the formyl peptide receptors. Promotes rearrangement of the actin cytoskeleton, cell polarization and cell migration. Promotes resolution of inflammation and wound healing. Acts via neutrophil N-formyl peptide receptors to enhance the release of CXCL2. This is Annexin A1 (ANXA1) from Equus caballus (Horse).